Here is a 518-residue protein sequence, read N- to C-terminus: Major facilitator superfamily domain-containing protein 8 (518 aa).

A disordered region spans residues 1–20 (MAGLRNESEQEPLLGDTPGS). The Cytoplasmic segment spans residues 1-40 (MAGLRNESEQEPLLGDTPGSREWDILETEEHYKSRWRSIR). The short motif at 13 to 14 (LL) is the Dileucine internalization motif element. Residues 41 to 61 (ILYLTMFLSSVGFSVVMMSIW) form a helical membrane-spanning segment. The Extracellular portion of the chain corresponds to 62–74 (PYLQKIDPTADTS). The chain crosses the membrane as a helical span at residues 75-95 (FLGWVIASYSLGQMVASPIFG). Residues 96 to 105 (LWSNYRPRKE) are Cytoplasmic-facing. A helical membrane pass occupies residues 106–126 (PLIVSILISVAANCLYAYLHI). Over 127 to 131 (PASHN) the chain is Extracellular. A helical membrane pass occupies residues 132–152 (KYYMLVARGLLGIGAGNVAVV). Residues 153 to 173 (RSYTAGATSLQERTSSMANIS) lie on the Cytoplasmic side of the membrane. Residues 174–194 (MCQALGFILGPVFQTCFTFLG) traverse the membrane as a helical segment. The Extracellular portion of the chain corresponds to 195–211 (EKGVTWDVIKLQINMYT). The chain crosses the membrane as a helical span at residues 212–232 (TPVLLSAFLGILNIILILAIL). The Cytoplasmic portion of the chain corresponds to 233–266 (REHRVDDSGRQCKSINFEEASTDEAQVPQGNIDQ). A helical membrane pass occupies residues 267–287 (VAVVAINVLFFVTLFIFALFE). Residues 288-304 (TIITPLTMDMYAWTQEQ) are Extracellular-facing. A helical transmembrane segment spans residues 305–325 (AVLYNGIILAALGVEAVVIFL). Over 326–337 (GVKLLSKKIGER) the chain is Cytoplasmic. The chain crosses the membrane as a helical span at residues 338-358 (AILLGGLIVVWVGFFILLPWG). Residues 359 to 412 (NQFPKIQWEDLHNNSIPNTTFGEIIIGLWKSPMEDDNERPTGCSIEQAWCLYTP) lie on the Extracellular side of the membrane. Residues asparagine 371 and asparagine 376 are each glycosylated (N-linked (GlcNAc...) asparagine). The helical transmembrane segment at 413–433 (VIHLAQFLTSAVLIGLGYPVC) threads the bilayer. Over 434–451 (NLMSYTLYSKILGPKPQG) the chain is Cytoplasmic. Residues 452–472 (VYMGWLTASGSGARILGPMFI) traverse the membrane as a helical segment. The Extracellular segment spans residues 473-482 (SQVYAHWGPR). The helical transmembrane segment at 483-503 (WAFSLVCGIIVLTITLLGVVY) threads the bilayer. At 504-518 (KRLIALSVRYGRIQE) the chain is on the cytoplasmic side.

It belongs to the major facilitator superfamily. In terms of tissue distribution, expressed at very low levels in all tissues tested.

The protein resides in the endosome membrane. Its subcellular location is the lysosome membrane. The enzyme catalyses chloride(in) = chloride(out). The catalysed reaction is iodide(out) = iodide(in). It catalyses the reaction fluoride(in) = fluoride(out). Its activity is regulated as follows. Inhibited by chloride channel blockers 4,4'-diisothiocyano-2,2'-stilbenedisulfonate (DIDS), niflumic acid (NFA), and 5-Nitro-2-(3-phenylpropylamino) benzoic acid (NPPB). Functionally, outward-rectifying chloride channel involved in endolysosomal chloride homeostasis, membrane fusion and function. Conducts chloride currents up to hundreds of picoamperes. Regulates lysosomal calcium content by reducing the lysosomal membrane potential, thereby activating TRPML1 channel and further release of lysosomal calcium ions. Regulates the pH in endolysosomal compartments and may contribute to progressive acidification from endosome to lysosome. Permeable to other halides such as iodide and fluoride ions. This chain is Major facilitator superfamily domain-containing protein 8, found in Homo sapiens (Human).